The following is a 184-amino-acid chain: Lipid A acyltransferase PagP (184 aa).

The N-terminal stretch at 1-22 (MNIRHGIIAMSSTMLVPLAAEA) is a signal peptide. Active-site residues include H57, D100, and S101.

The protein belongs to the lipid A palmitoyltransferase family. As to quaternary structure, homodimer.

It is found in the cell outer membrane. It catalyses the reaction a lipid A + a 1,2-diacyl-sn-glycero-3-phosphocholine = a hepta-acyl lipid A + a 2-acyl-sn-glycero-3-phosphocholine. The catalysed reaction is a lipid IVA + a 1,2-diacyl-sn-glycero-3-phosphocholine = a lipid IVB + a 2-acyl-sn-glycero-3-phosphocholine. The enzyme catalyses a lipid IIA + a 1,2-diacyl-sn-glycero-3-phosphocholine = a lipid IIB + a 2-acyl-sn-glycero-3-phosphocholine. In terms of biological role, transfers a fatty acid residue from the sn-1 position of a phospholipid to the N-linked hydroxyfatty acid chain on the proximal unit of lipid A or its precursors. The protein is Lipid A acyltransferase PagP of Methylobacillus flagellatus (strain ATCC 51484 / DSM 6875 / VKM B-1610 / KT).